The sequence spans 430 residues: Enolase (430 aa).

Gln-167 lines the (2R)-2-phosphoglycerate pocket. Glu-209 functions as the Proton donor in the catalytic mechanism. The Mg(2+) site is built by Asp-246, Glu-287, and Asp-314. Lys-339, Arg-368, and Ser-369 together coordinate (2R)-2-phosphoglycerate. The active-site Proton acceptor is the Lys-339.

It belongs to the enolase family. Requires Mg(2+) as cofactor.

It localises to the cytoplasm. The protein localises to the secreted. The protein resides in the cell surface. The enzyme catalyses (2R)-2-phosphoglycerate = phosphoenolpyruvate + H2O. Its pathway is carbohydrate degradation; glycolysis; pyruvate from D-glyceraldehyde 3-phosphate: step 4/5. Catalyzes the reversible conversion of 2-phosphoglycerate (2-PG) into phosphoenolpyruvate (PEP). It is essential for the degradation of carbohydrates via glycolysis. This chain is Enolase, found in Synechococcus sp. (strain ATCC 27144 / PCC 6301 / SAUG 1402/1) (Anacystis nidulans).